We begin with the raw amino-acid sequence, 142 residues long: Hemoglobin subunit alpha-1/2 (142 aa).

In terms of domain architecture, Globin spans 2 to 142; the sequence is VLSADDKTNI…VSTVLTSKYR (141 aa). At Ser4 the chain carries Phosphoserine. Residue Lys8 is modified to N6-succinyllysine. Phosphothreonine is present on Thr9. Residue Lys12 is modified to N6-succinyllysine. Lys17 carries the post-translational modification N6-acetyllysine; alternate. An N6-succinyllysine; alternate modification is found at Lys17. Tyr25 bears the Phosphotyrosine mark. Lys41 bears the N6-succinyllysine mark. At Ser50 the chain carries Phosphoserine. Residue His59 participates in O2 binding. His88 serves as a coordination point for heme b. Ser103 carries the phosphoserine modification. At Thr109 the chain carries Phosphothreonine. Residues Ser125 and Ser132 each carry the phosphoserine modification. Phosphothreonine is present on residues Thr135 and Thr138. Phosphoserine is present on Ser139.

Belongs to the globin family. As to quaternary structure, heterotetramer of two alpha chains and two beta chains. Red blood cells.

Functionally, involved in oxygen transport from the lung to the various peripheral tissues. Its function is as follows. Hemopressin acts as an antagonist peptide of the cannabinoid receptor CNR1. Hemopressin-binding efficiently blocks cannabinoid receptor CNR1 and subsequent signaling. The protein is Hemoglobin subunit alpha-1/2 (Hba1) of Rattus norvegicus (Rat).